Reading from the N-terminus, the 595-residue chain is Beta-(1--&gt;2)glucan export ATP-binding/permease protein NdvA (595 aa).

The next 5 helical transmembrane spans lie at 21 to 41, 56 to 76, 129 to 149, 158 to 178, and 252 to 272; these read FLLI…EPIL, LVTL…YVLV, IWLE…VLVP, LSIV…LVMQ, and ISIV…QLSV. In terms of domain architecture, ABC transmembrane type-1 spans 21–301; it reads FLLICTANIT…ISGFINLAVS (281 aa). The ABC transporter domain maps to 335 to 569; sequence IQFHHVTYEF…DGHFYKLLKR (235 aa). An ATP-binding site is contributed by 368-375; the sequence is GPTGAGKT.

Belongs to the ABC transporter superfamily. Beta-(1--&gt;2)glucan exporter (TC 3.A.1.108.1) family. In terms of assembly, homodimer.

The protein localises to the cell inner membrane. It catalyses the reaction [(1-&gt;2)-beta-D-glucosyl](n)(in) + ATP + H2O = [(1-&gt;2)-beta-D-glucosyl](n)(out) + ADP + phosphate + H(+). Involved in beta-(1--&gt;2)glucan export. Transmembrane domains (TMD) form a pore in the inner membrane and the ATP-binding domain (NBD) is responsible for energy generation. In Bartonella bacilliformis, this protein is Beta-(1--&gt;2)glucan export ATP-binding/permease protein NdvA.